The following is a 3953-amino-acid chain: Zinc finger protein 469 (3953 aa).

Disordered regions lie at residues 1–274 (MPGE…VSFQ), 313–465 (WPEE…MFFN), 512–672 (EWQG…FPFP), 763–784 (GHQRSPGPPGLPSPPAAPRVPA), 869–1383 (ADEE…HSEL), 1400–1461 (PKPS…DLPV), 1575–1610 (LQRSKDTRGAPRELAEAESVGRVELGTGTEPPSQRR), 1703–1864 (SKTG…GASS), 1884–1947 (VSNT…TVEG), 1991–2030 (KTQGQGTANQLQPENGVSPGGTDNHASVNASPKTALTGPT), 2070–2700 (LTAA…TLGP), 2716–2915 (AGET…LSDS), 3001–3036 (EMPAPADDSSSSLGDVSPEPPSLERERCDGGLPGNT), and 3072–3110 (GPSFLDFEGTASSQGPQSRRTEEAAGAGRAQGRGRPAKG). The span at 187–198 (PPSSFTSTNYTS) shows a compositional bias: polar residues. Pro residues-rich tracts occupy residues 202–211 (TPRPPAPGPP) and 324–335 (YPLPTQPAPSPL). Residues 603–623 (STCSSLSPMSSSPANPSSEES) show a composition bias toward low complexity. Pro residues-rich tracts occupy residues 768–780 (PGPPGLPSPPAAP) and 896–911 (KAPPPLPAATPDPQTP). The span at 944-953 (QQRRGKQLKL) shows a compositional bias: basic residues. Residues 963 to 975 (AAEGSGSGGGGRA) show a composition bias toward gly residues. A compositionally biased stretch (basic and acidic residues) spans 981–991 (RRNDGLGERPP). The segment covering 1005–1017 (RADPAPRVPRAAA) has biased composition (low complexity). 2 stretches are compositionally biased toward basic residues: residues 1025–1042 (SRRRRLPPRKDPRKRKAR) and 1058–1070 (KNRRHRRLGRRAG). Over residues 1082–1093 (PGAEDRRLREYD) the composition is skewed to basic and acidic residues. Residues 1094–1103 (FASESEEDEQ) show a composition bias toward acidic residues. Basic and acidic residues predominate over residues 1120–1137 (KRKEVELTQGPREDEPQK). The span at 1158-1177 (PGGSRPGPGRSPQARGPSRS) shows a compositional bias: low complexity. Residues 1213 to 1229 (EETRPSLDFPQEAKEPE) are compositionally biased toward basic and acidic residues. Polar residues-rich tracts occupy residues 1278–1290 (PKPSGSLANTAPH) and 1333–1350 (NPSSTACPKPSVLSSKIS). Positions 1577 to 1595 (RSKDTRGAPRELAEAESVG) are enriched in basic and acidic residues. Polar residues-rich tracts occupy residues 1991–2005 (KTQGQGTANQLQPEN) and 2014–2024 (NHASVNASPKT). Residues 2243-2262 (DTPKDSTLRIPEDSRKEKLW) show a composition bias toward basic and acidic residues. Residues 2409–2435 (TAPSSTASDFQSDSPQSHRNASHQTPQ) show a composition bias toward polar residues. The C2H2-type 1 zinc finger occupies 2472 to 2498 (VTCEVCAASFRSGPGLSRHKARKHRPH). The span at 2488 to 2498 (SRHKARKHRPH) shows a compositional bias: basic residues. A compositionally biased stretch (low complexity) spans 2506–2521 (SPAALPAQQPLEPLAQ). Basic and acidic residues predominate over residues 2534–2546 (SGKERPNHSRGDP). Over residues 2565–2574 (PGSPHSQQLH) the composition is skewed to low complexity. Residues 2592–2631 (PRPDQAREDELHPKQAEKREGRRWRREPTVDSPSHSEGKS) show a composition bias toward basic and acidic residues. Residues 2632-2642 (NKKRGKLRGRR) show a composition bias toward basic residues. Residues 2664-2676 (PSPAMASYAASPS) show a composition bias toward low complexity. Over residues 2777–2787 (DSSRAHSRSEE) the composition is skewed to basic and acidic residues. Positions 2805–2816 (TSSSPADSTTSS) are enriched in low complexity. The segment covering 2869–2879 (LTRKRNPHVYG) has biased composition (basic residues). Residues 3095–3105 (AAGAGRAQGRG) are compositionally biased toward low complexity. A C2H2-type 2 zinc finger spans residues 3115 to 3137 (YKCKVCFQRFRSLGELDLHKLAH). Residues 3232–3322 (TEPAPKHHRG…PDPWAGGEPL (91 aa)) are disordered. The segment covering 3260–3272 (GEAKKDSPGERAK) has biased composition (basic and acidic residues). Residues 3302 to 3314 (PGPPRTTPSPSPD) are compositionally biased toward pro residues. C2H2-type zinc fingers lie at residues 3337 to 3359 (RDCHHCGKRFPKPFKLQRHLAVH) and 3365 to 3388 (YLCPRCPRVYPEHGELLAHLGGAH). The C2H2-type 5; degenerate zinc-finger motif lies at 3418 to 3442 (FACSSCNYTFAKKEQFDRHMNKHLR). 3 disordered regions span residues 3448–3501 (FAFR…PILS), 3518–3559 (STTK…SPFP), and 3576–3925 (ERPE…HRTA). Residues 3584–3602 (PGSPGPLLQQALPLGASLP) show a composition bias toward low complexity. Residues 3633-3651 (CAPDHFQEDHLLQKEKEVS) show a composition bias toward basic and acidic residues. 2 stretches are compositionally biased toward low complexity: residues 3728–3741 (PGPSSQGSGSPRPG) and 3749–3759 (QPQPASGQLQS). Composition is skewed to basic and acidic residues over residues 3876-3892 (EQRKAEPGHTQRKDRLG) and 3915-3925 (EPAEPHTHRTA).

The protein belongs to the krueppel C2H2-type zinc-finger protein family. Detected in cornea, sclera, skin fibroblasts and striated muscle.

It is found in the nucleus. Functionally, may be involved in transcriptional regulation. This Homo sapiens (Human) protein is Zinc finger protein 469 (ZNF469).